The chain runs to 59 residues: Large ribosomal subunit protein uL30 (59 aa).

Belongs to the universal ribosomal protein uL30 family. As to quaternary structure, part of the 50S ribosomal subunit.

This chain is Large ribosomal subunit protein uL30, found in Acetivibrio thermocellus (strain ATCC 27405 / DSM 1237 / JCM 9322 / NBRC 103400 / NCIMB 10682 / NRRL B-4536 / VPI 7372) (Clostridium thermocellum).